Reading from the N-terminus, the 389-residue chain is MVSVSEIRQAQRAEGPATILAIGTANPANKVEQATYPDFYFKITNSEHKVELKEKFQRMCDKSMIKSRYMYLTEEILKENPSLCEYMAPSLDARQDMVVVEVPRLGKEAAVKAIKEWGQPKSKITHLIFCTTSGVDMPGADYQLTKLLGLRPYVKRYMMYQQGCFAGGTVLRLAKDLAENNKGARVLVVCSEVTAVTFRGPSDTHLDSLVGQALFGDGAAALIVGSDPVPEIEKPIFVMVWTAQTIAPDSEGAIDGHLREAGLTFHLLKDVPGIVSKNIDKALVEAFQPLGISDYNSIFWIAHPGGPAILDQVEQKLALKPEKMKATREVLSEYGNMSSACVLFILDEMRKKSTKDGLKTTGEGLDWGVLFGFGPGLTIETVVLHSVAI.

Cys-164 is a catalytic residue.

It belongs to the thiolase-like superfamily. Chalcone/stilbene synthases family.

The catalysed reaction is (E)-4-coumaroyl-CoA + 3 malonyl-CoA + 3 H(+) = 2',4,4',6'-tetrahydroxychalcone + 3 CO2 + 4 CoA. It functions in the pathway secondary metabolite biosynthesis; flavonoid biosynthesis. Functionally, the primary product of this enzyme is 4,2',4',6'-tetrahydroxychalcone (also termed naringenin-chalcone or chalcone) which can under specific conditions spontaneously isomerize into naringenin. This chain is Chalcone synthase 3 (CHS3), found in Trifolium subterraneum (Subterranean clover).